Consider the following 213-residue polypeptide: FMN-dependent NADH:quinone oxidoreductase 1 (213 aa).

Residue 18 to 20 (SVS) participates in FMN binding.

It belongs to the azoreductase type 1 family. As to quaternary structure, homodimer. Requires FMN as cofactor.

The catalysed reaction is 2 a quinone + NADH + H(+) = 2 a 1,4-benzosemiquinone + NAD(+). It catalyses the reaction N,N-dimethyl-1,4-phenylenediamine + anthranilate + 2 NAD(+) = 2-(4-dimethylaminophenyl)diazenylbenzoate + 2 NADH + 2 H(+). Quinone reductase that provides resistance to thiol-specific stress caused by electrophilic quinones. Its function is as follows. Also exhibits azoreductase activity. Catalyzes the reductive cleavage of the azo bond in aromatic azo compounds to the corresponding amines. This chain is FMN-dependent NADH:quinone oxidoreductase 1, found in Bacillus cereus (strain ZK / E33L).